The primary structure comprises 328 residues: Tetraacyldisaccharide 4'-kinase (328 aa).

Thr-55 to Thr-62 is an ATP binding site.

It belongs to the LpxK family.

It catalyses the reaction a lipid A disaccharide + ATP = a lipid IVA + ADP + H(+). The protein operates within glycolipid biosynthesis; lipid IV(A) biosynthesis; lipid IV(A) from (3R)-3-hydroxytetradecanoyl-[acyl-carrier-protein] and UDP-N-acetyl-alpha-D-glucosamine: step 6/6. In terms of biological role, transfers the gamma-phosphate of ATP to the 4'-position of a tetraacyldisaccharide 1-phosphate intermediate (termed DS-1-P) to form tetraacyldisaccharide 1,4'-bis-phosphate (lipid IVA). This Escherichia coli O157:H7 protein is Tetraacyldisaccharide 4'-kinase.